The following is a 200-amino-acid chain: Large ribosomal subunit protein uL18 (200 aa).

The protein belongs to the universal ribosomal protein uL18 family. In terms of assembly, part of the 50S ribosomal subunit. Contacts the 5S and 23S rRNAs.

This is one of the proteins that bind and probably mediate the attachment of the 5S RNA into the large ribosomal subunit, where it forms part of the central protuberance. This chain is Large ribosomal subunit protein uL18, found in Thermococcus sibiricus (strain DSM 12597 / MM 739).